We begin with the raw amino-acid sequence, 319 residues long: Biotin synthase (319 aa).

The Radical SAM core domain maps to 44–273 (IHGDGIDLCS…EAKIRLAGGR (230 aa)). 3 residues coordinate [4Fe-4S] cluster: Cys62, Cys66, and Cys69. Positions 106, 138, 198, and 268 each coordinate [2Fe-2S] cluster.

The protein belongs to the radical SAM superfamily. Biotin synthase family. In terms of assembly, homodimer. [4Fe-4S] cluster serves as cofactor. The cofactor is [2Fe-2S] cluster.

The catalysed reaction is (4R,5S)-dethiobiotin + (sulfur carrier)-SH + 2 reduced [2Fe-2S]-[ferredoxin] + 2 S-adenosyl-L-methionine = (sulfur carrier)-H + biotin + 2 5'-deoxyadenosine + 2 L-methionine + 2 oxidized [2Fe-2S]-[ferredoxin]. Its pathway is cofactor biosynthesis; biotin biosynthesis; biotin from 7,8-diaminononanoate: step 2/2. Functionally, catalyzes the conversion of dethiobiotin (DTB) to biotin by the insertion of a sulfur atom into dethiobiotin via a radical-based mechanism. In Clostridium perfringens (strain 13 / Type A), this protein is Biotin synthase.